Reading from the N-terminus, the 122-residue chain is Large ribosomal subunit protein bL12 (122 aa).

This sequence belongs to the bacterial ribosomal protein bL12 family. As to quaternary structure, homodimer. Part of the ribosomal stalk of the 50S ribosomal subunit. Forms a multimeric L10(L12)X complex, where L10 forms an elongated spine to which 2 to 4 L12 dimers bind in a sequential fashion. Binds GTP-bound translation factors.

In terms of biological role, forms part of the ribosomal stalk which helps the ribosome interact with GTP-bound translation factors. Is thus essential for accurate translation. This chain is Large ribosomal subunit protein bL12, found in Myxococcus xanthus (strain DK1622).